Here is a 401-residue protein sequence, read N- to C-terminus: Imidazolonepropionase (401 aa).

His-66 and His-68 together coordinate Fe(3+). Zn(2+) is bound by residues His-66 and His-68. Arg-75, Tyr-138, and His-171 together coordinate 4-imidazolone-5-propanoate. Tyr-138 contributes to the N-formimidoyl-L-glutamate binding site. His-236 contacts Fe(3+). Residue His-236 participates in Zn(2+) binding. Residue Gln-239 participates in 4-imidazolone-5-propanoate binding. Asp-311 is a binding site for Fe(3+). Asp-311 is a binding site for Zn(2+). N-formimidoyl-L-glutamate contacts are provided by Asn-313 and Gly-315. Thr-316 is a binding site for 4-imidazolone-5-propanoate.

The protein belongs to the metallo-dependent hydrolases superfamily. HutI family. The cofactor is Zn(2+). Fe(3+) is required as a cofactor.

It is found in the cytoplasm. It carries out the reaction 4-imidazolone-5-propanoate + H2O = N-formimidoyl-L-glutamate. The protein operates within amino-acid degradation; L-histidine degradation into L-glutamate; N-formimidoyl-L-glutamate from L-histidine: step 3/3. Catalyzes the hydrolytic cleavage of the carbon-nitrogen bond in imidazolone-5-propanoate to yield N-formimidoyl-L-glutamate. It is the third step in the universal histidine degradation pathway. The chain is Imidazolonepropionase from Pseudomonas entomophila (strain L48).